Consider the following 440-residue polypeptide: Ribosomal protein uS12 methylthiotransferase RimO (440 aa).

One can recognise an MTTase N-terminal domain in the interval 1 to 117 (MKVHLTSLGC…VIEAVAGKES (117 aa)). [4Fe-4S] cluster contacts are provided by Cys10, Cys46, Cys80, Cys155, Cys159, and Cys162. The 231-residue stretch at 141 to 371 (CATPHTVYVK…MTAQIDISSR (231 aa)) folds into the Radical SAM core domain. The 67-residue stretch at 374 to 440 (AKRVGSREPV…SAYDLTGEAQ (67 aa)) folds into the TRAM domain.

The protein belongs to the methylthiotransferase family. RimO subfamily. [4Fe-4S] cluster serves as cofactor.

The protein localises to the cytoplasm. The enzyme catalyses L-aspartate(89)-[ribosomal protein uS12]-hydrogen + (sulfur carrier)-SH + AH2 + 2 S-adenosyl-L-methionine = 3-methylsulfanyl-L-aspartate(89)-[ribosomal protein uS12]-hydrogen + (sulfur carrier)-H + 5'-deoxyadenosine + L-methionine + A + S-adenosyl-L-homocysteine + 2 H(+). Its function is as follows. Catalyzes the methylthiolation of an aspartic acid residue of ribosomal protein uS12. This chain is Ribosomal protein uS12 methylthiotransferase RimO, found in Desulfosudis oleivorans (strain DSM 6200 / JCM 39069 / Hxd3) (Desulfococcus oleovorans).